The following is a 387-amino-acid chain: Ferrochelatase (387 aa).

The ferrochelatase stretch occupies residues 1-318 (MGRVGVLLLN…VFIDALAQMV (318 aa)). Residues His196 and Glu277 each contribute to the Fe cation site. Residues 319–387 (MDSLNDPPCT…QGPLHFVGLL (69 aa)) are hlip domain.

In the N-terminal section; belongs to the ferrochelatase family. This sequence in the C-terminal section; belongs to the Hlip family.

Its subcellular location is the cytoplasm. The catalysed reaction is heme b + 2 H(+) = protoporphyrin IX + Fe(2+). It participates in porphyrin-containing compound metabolism; protoheme biosynthesis; protoheme from protoporphyrin-IX: step 1/1. In terms of biological role, catalyzes the ferrous insertion into protoporphyrin IX. Functionally, the Hlip proteins might regulate tetrapyrrole biosynthesis, maybe at the level of aminolevulinic acid synthesis. Deletion of 4 to 5 members of the Hlip family (always including this member) suggests the proteins are involved in regulation of chlorophyll biosynthesis, in stabilization of chlorophyll-binding proteins and/or in reuse of chlorophylls, and may regulate tetrapyrrole biosynthesis. The Hlip proteins probably stabilize PSII assembly intermediates. In Synechocystis sp. (strain ATCC 27184 / PCC 6803 / Kazusa), this protein is Ferrochelatase.